We begin with the raw amino-acid sequence, 430 residues long: MKNKTSAGLFSRAKEVIPGGVNSPVRAFRAVGGNPLFIKRAHGAYLVDEDDNQYIELINSWGPMILGHGNELIEKAVRDALSNSLSFGAPSRKEVEMAELIVSMVPSVEMVRMVNSGTEATMSAIRVARGYTGKEKIIKFEGCYHGHGDSFLIAAGSGAVTMGVPDSPGVPQGVANDTLTAPYNDIEAVRILVEKNKNKIAAIIIEPVAGNMGCVLPKAGFLEALREICDQENIVLIFDEVMSGFRLSVSGAQGVYGVQPDMTTMGKIIGGGMPVGAYGGKKEIMQNVSPSGPIYQAGTLSGNPIAMSAGLAILQYLQASPALYTQLNDQTDYLIHGMRKANNLLGLDYTFNHVGSMFTMFFTNIGVYDFETAKKSDLSKFAAYFQAMLSRGIYLAPSQFESLFISSAITKQLADQIIQAHAESMKEIHN.

At Lys267 the chain carries N6-(pyridoxal phosphate)lysine.

It belongs to the class-III pyridoxal-phosphate-dependent aminotransferase family. HemL subfamily. Homodimer. Requires pyridoxal 5'-phosphate as cofactor.

Its subcellular location is the cytoplasm. It catalyses the reaction (S)-4-amino-5-oxopentanoate = 5-aminolevulinate. The protein operates within porphyrin-containing compound metabolism; protoporphyrin-IX biosynthesis; 5-aminolevulinate from L-glutamyl-tRNA(Glu): step 2/2. The polypeptide is Glutamate-1-semialdehyde 2,1-aminomutase (Cytophaga hutchinsonii (strain ATCC 33406 / DSM 1761 / CIP 103989 / NBRC 15051 / NCIMB 9469 / D465)).